Here is a 310-residue protein sequence, read N- to C-terminus: D-alanine--D-alanine ligase (310 aa).

Residues 107-305 form the ATP-grasp domain; sequence KKVWQSAGLP…FSALVQSILA (199 aa). 134 to 189 lines the ATP pocket; that stretch reads EQLHCQDFVIKPALEGSSVGVSRVKNQEQLAAAIPFAGGARAKIMAEPWIVGRELT. The Mg(2+) site is built by aspartate 259, glutamate 272, and asparagine 274.

It belongs to the D-alanine--D-alanine ligase family. The cofactor is Mg(2+). Mn(2+) serves as cofactor.

It localises to the cytoplasm. The enzyme catalyses 2 D-alanine + ATP = D-alanyl-D-alanine + ADP + phosphate + H(+). It participates in cell wall biogenesis; peptidoglycan biosynthesis. Functionally, cell wall formation. This is D-alanine--D-alanine ligase from Dichelobacter nodosus (strain VCS1703A).